A 503-amino-acid chain; its full sequence is Dihydropyrimidinase (503 aa).

The Zn(2+) site is built by His66, His68, and Lys158. Lys158 is subject to N6-carboxylysine. Position 163 (Tyr163) interacts with substrate. Residues His191, His247, and Asp325 each coordinate Zn(2+). Asn346 lines the substrate pocket.

This sequence belongs to the metallo-dependent hydrolases superfamily. Hydantoinase/dihydropyrimidinase family. In terms of assembly, homotetramer. Requires Zn(2+) as cofactor. In terms of processing, carboxylation allows a single lysine to coordinate two zinc ions.

The enzyme catalyses 5,6-dihydrouracil + H2O = 3-(carbamoylamino)propanoate + H(+). Functionally, catalyzes the second step of the reductive pyrimidine degradation, the reversible hydrolytic ring opening of dihydropyrimidines. Can catalyze the ring opening of 5,6-dihydrouracil to N-carbamyl-alanine and of 5,6-dihydrothymine to N-carbamyl-amino isobutyrate. The sequence is that of Dihydropyrimidinase (pyd2) from Dictyostelium discoideum (Social amoeba).